The chain runs to 355 residues: Epoxyqueuosine reductase (355 aa).

The active-site Proton donor is D143. The region spanning 185-217 (LPLPIDTPATAHCGTCTRCIDICPTQAIIAPHR) is the 4Fe-4S ferredoxin-type domain. [4Fe-4S] cluster is bound by residues C197, C200, C203, C207, C223, C250, C253, and C257.

It belongs to the QueG family. As to quaternary structure, monomer. The cofactor is cob(II)alamin. [4Fe-4S] cluster is required as a cofactor.

The protein resides in the cytoplasm. The enzyme catalyses epoxyqueuosine(34) in tRNA + AH2 = queuosine(34) in tRNA + A + H2O. The protein operates within tRNA modification; tRNA-queuosine biosynthesis. Functionally, catalyzes the conversion of epoxyqueuosine (oQ) to queuosine (Q), which is a hypermodified base found in the wobble positions of tRNA(Asp), tRNA(Asn), tRNA(His) and tRNA(Tyr). The sequence is that of Epoxyqueuosine reductase from Xanthomonas campestris pv. campestris (strain ATCC 33913 / DSM 3586 / NCPPB 528 / LMG 568 / P 25).